A 767-amino-acid chain; its full sequence is Slo-interacting protein 1 (767 aa).

Residues 202–280 enclose the PDZ domain; sequence QQSSTDTNKG…SVTLLVSRIL (79 aa). Disordered stretches follow at residues 521-557 and 744-767; these read GNAAAPGEEVDNSSSAYNTGDSNNSASPHQNTTNPDE and KEERKRHIERAREKRHHQTQQQQQ. The span at 532-555 shows a compositional bias: polar residues; it reads NSSSAYNTGDSNNSASPHQNTTNP. The segment covering 744 to 755 has biased composition (basic and acidic residues); it reads KEERKRHIERAR.

Interacts with Slo. As to expression, in embryos, it is expressed throughout the CNS and in several peripheral locations. Colocalizes with Slo.

May selectively reduce calcium-activated potassium channel (Slo) currents by reducing the number of Slo channels in the plasma membrane. The sequence is that of Slo-interacting protein 1 (Slip1) from Drosophila melanogaster (Fruit fly).